We begin with the raw amino-acid sequence, 741 residues long: Exostosin-1b (741 aa).

The Cytoplasmic portion of the chain corresponds to 1–7 (MQAKKRY). Residues 8 to 28 (LISLLTGAFLVLLIYLGGGGV) traverse the membrane as a helical; Signal-anchor for type II membrane protein segment. Over 29–741 (PGPAAPGSRS…RKKYREIERL (713 aa)) the chain is Lumenal. N84 and N325 each carry an N-linked (GlcNAc...) asparagine glycan. The UDP-N-acetyl-alpha-D-glucosamine site is built by R435, R544, D560, E561, D562, E648, D649, and R696. D562 contributes to the Mn(2+) binding site. C647 and C699 form a disulfide bridge. The active site involves D649.

It belongs to the glycosyltransferase 47 family. The cofactor is Mn(2+).

Its subcellular location is the endoplasmic reticulum membrane. It carries out the reaction 3-O-{[(1-&gt;4)-beta-D-GlcA-(1-&gt;4)-alpha-D-GlcNAc](n)-(1-&gt;4)-beta-D-GlcA-(1-&gt;3)-beta-D-Gal-(1-&gt;3)-beta-D-Gal-(1-&gt;4)-beta-D-Xyl}-L-seryl-[protein] + UDP-N-acetyl-alpha-D-glucosamine = 3-O-{alpha-D-GlcNAc-[(1-&gt;4)-beta-D-GlcA-(1-&gt;4)-alpha-D-GlcNAc](n)-(1-&gt;4)-beta-D-GlcA-(1-&gt;3)-beta-D-Gal-(1-&gt;3)-beta-D-Gal-(1-&gt;4)-beta-D-Xyl}-L-seryl-[protein] + UDP + H(+). The enzyme catalyses 3-O-{alpha-D-GlcNAc-[(1-&gt;4)-beta-D-GlcA-(1-&gt;4)-alpha-D-GlcNAc](n)-(1-&gt;4)-beta-D-GlcA-(1-&gt;3)-beta-D-Gal-(1-&gt;3)-beta-D-Gal-(1-&gt;4)-beta-D-Xyl}-L-seryl-[protein] + UDP-alpha-D-glucuronate = 3-O-{[(1-&gt;4)-beta-D-GlcA-(1-&gt;4)-alpha-D-GlcNAc](n+1)-(1-&gt;4)-beta-D-GlcA-(1-&gt;3)-beta-D-Gal-(1-&gt;3)-beta-D-Gal-(1-&gt;4)-beta-D-Xyl}-L-seryl-[protein] + UDP + H(+). The protein operates within protein modification; protein glycosylation. Its function is as follows. Glycosyltransferase required for the biosynthesis of heparan-sulfate. This is Exostosin-1b (ext1b) from Danio rerio (Zebrafish).